The sequence spans 349 residues: DNA-directed RNA polymerase subunit alpha (349 aa).

Residues 1–226 (MLIAQRPTLV…GLFGLAQELN (226 aa)) are alpha N-terminal domain (alpha-NTD). An alpha C-terminal domain (alpha-CTD) region spans residues 241–349 (AALAADLALP…GAEFVETEQY (109 aa)). Residues 308 to 349 (LKDSPPGFDPRQAVDTYGTDSYNPAFSDPSDDGAEFVETEQY) form a disordered region. Acidic residues predominate over residues 336-349 (PSDDGAEFVETEQY).

It belongs to the RNA polymerase alpha chain family. In terms of assembly, homodimer. The RNAP catalytic core consists of 2 alpha, 1 beta, 1 beta' and 1 omega subunit. When a sigma factor is associated with the core the holoenzyme is formed, which can initiate transcription.

It carries out the reaction RNA(n) + a ribonucleoside 5'-triphosphate = RNA(n+1) + diphosphate. Functionally, DNA-dependent RNA polymerase catalyzes the transcription of DNA into RNA using the four ribonucleoside triphosphates as substrates. This Frankia alni (strain DSM 45986 / CECT 9034 / ACN14a) protein is DNA-directed RNA polymerase subunit alpha.